Reading from the N-terminus, the 312-residue chain is Malate dehydrogenase (312 aa).

Residues 7–13 (GAAGGIG) and aspartate 34 contribute to the NAD(+) site. Substrate is bound by residues arginine 81 and arginine 87. NAD(+) is bound by residues asparagine 94 and 117–119 (ITN). Substrate contacts are provided by asparagine 119 and arginine 153. Histidine 177 serves as the catalytic Proton acceptor. Position 227 (methionine 227) interacts with NAD(+).

It belongs to the LDH/MDH superfamily. MDH type 1 family. As to quaternary structure, homodimer.

It carries out the reaction (S)-malate + NAD(+) = oxaloacetate + NADH + H(+). Its function is as follows. Catalyzes the reversible oxidation of malate to oxaloacetate. The polypeptide is Malate dehydrogenase (Salmonella gallinarum (strain 287/91 / NCTC 13346)).